The following is a 254-amino-acid chain: Phosphoribosylaminoimidazole-succinocarboxamide synthase (254 aa).

It belongs to the SAICAR synthetase family.

The enzyme catalyses 5-amino-1-(5-phospho-D-ribosyl)imidazole-4-carboxylate + L-aspartate + ATP = (2S)-2-[5-amino-1-(5-phospho-beta-D-ribosyl)imidazole-4-carboxamido]succinate + ADP + phosphate + 2 H(+). It functions in the pathway purine metabolism; IMP biosynthesis via de novo pathway; 5-amino-1-(5-phospho-D-ribosyl)imidazole-4-carboxamide from 5-amino-1-(5-phospho-D-ribosyl)imidazole-4-carboxylate: step 1/2. The sequence is that of Phosphoribosylaminoimidazole-succinocarboxamide synthase from Brucella anthropi (strain ATCC 49188 / DSM 6882 / CCUG 24695 / JCM 21032 / LMG 3331 / NBRC 15819 / NCTC 12168 / Alc 37) (Ochrobactrum anthropi).